The primary structure comprises 288 residues: Lysosomal thioesterase PPT2-B (288 aa).

An N-terminal signal peptide occupies residues 1–20 (MRGYLLLLPLLLCLVDNSVS). Cys95 and Cys103 are oxidised to a cystine. The active-site Nucleophile is the Ser97. The N-linked (GlcNAc...) asparagine glycan is linked to Asn143. Cys151 and Cys162 are disulfide-bonded. Asn192 is a glycosylation site (N-linked (GlcNAc...) asparagine). Active-site residues include Asp214 and His269. N-linked (GlcNAc...) asparagine glycosylation is present at Asn275.

Belongs to the palmitoyl-protein thioesterase family.

It is found in the lysosome. It catalyses the reaction hexadecanoyl-CoA + H2O = hexadecanoate + CoA + H(+). It carries out the reaction S-hexadecanoyl-N-acetylcysteamine + H2O = N-acetylcysteamine + hexadecanoate + H(+). Functionally, catalyzes the cleavage of thioester bonds from S-palmitoyl-CoA or S-palmitoyl-N-acetylcysteamine (unbranched structures) but does not have activity against palmitoylcysteine or palmitoylated proteins, branched structures or bulky head groups. Conversely, hydrolyzes both long and short chain fatty acyl-CoA substrate. This is Lysosomal thioesterase PPT2-B (ppt2-b) from Xenopus laevis (African clawed frog).